We begin with the raw amino-acid sequence, 156 residues long: Probable low-salt glycan biosynthesis epimerase Agl13 (156 aa).

Substrate is bound by residues R19, E24, 39–41 (MSY), R51, H54, and H109.

The protein belongs to the dTDP-4-dehydrorhamnose 3,5-epimerase family.

The protein operates within protein modification; protein glycosylation. It functions in the pathway cell surface structure biogenesis; S-layer biogenesis. Functionally, epimerase involved in N-glycan biosynthetic pathway that takes place under low-salt conditions (1.75 M instead of 3.4 M). Participates in the formation of the tetrasaccharide present at 'Asn-532' of S-layer glycoprotein Csg, consisting of a sulfated hexose, 2 hexoses and rhamnose. Involved in the addition of final rhamnose (sugar 4) of the tetrasaccharide on the dolichol phosphate carrier. The sequence is that of Probable low-salt glycan biosynthesis epimerase Agl13 (agl13) from Haloferax volcanii (strain ATCC 29605 / DSM 3757 / JCM 8879 / NBRC 14742 / NCIMB 2012 / VKM B-1768 / DS2) (Halobacterium volcanii).